Consider the following 649-residue polypeptide: Phosphomethylpyrimidine synthase (649 aa).

Substrate is bound by residues N235, M264, Y293, H329, 349 to 351, 390 to 393, and E429; these read SRG and DGLR. A Zn(2+)-binding site is contributed by H433. Y456 is a binding site for substrate. H497 serves as a coordination point for Zn(2+). [4Fe-4S] cluster contacts are provided by C577, C580, and C585. The disordered stretch occupies residues 620-649; the sequence is GMRQKSQEFRDTGSELYHPAVGAKEAQLEE. Residues 621-632 are compositionally biased toward basic and acidic residues; it reads MRQKSQEFRDTG.

The protein belongs to the ThiC family. In terms of assembly, homodimer. [4Fe-4S] cluster is required as a cofactor.

It carries out the reaction 5-amino-1-(5-phospho-beta-D-ribosyl)imidazole + S-adenosyl-L-methionine = 4-amino-2-methyl-5-(phosphooxymethyl)pyrimidine + CO + 5'-deoxyadenosine + formate + L-methionine + 3 H(+). It functions in the pathway cofactor biosynthesis; thiamine diphosphate biosynthesis. Catalyzes the synthesis of the hydroxymethylpyrimidine phosphate (HMP-P) moiety of thiamine from aminoimidazole ribotide (AIR) in a radical S-adenosyl-L-methionine (SAM)-dependent reaction. The polypeptide is Phosphomethylpyrimidine synthase (Vibrio atlanticus (strain LGP32) (Vibrio splendidus (strain Mel32))).